The following is a 370-amino-acid chain: Ubiquitin-binding protein Rv1468c (370 aa).

Residues 1–72 (MSFVVANTEF…QVLSAQAAAF (72 aa)) form a UBA region. Residues 1-93 (MSFVVANTEF…AQAYAAAEAT (93 aa)) enclose the PE domain.

Belongs to the mycobacterial PE family. PGRS subfamily. In terms of assembly, interacts directly with host polyubiquitin in a UBA-dependent manner.

The protein localises to the secreted. It localises to the cell wall. The protein resides in the cell surface. Its function is as follows. Mediates direct binding of host ubiquitin (Ub) to the mycobacterial surface, which triggers host xenophagy. Interaction between Rv1468c and ubiquitin recruits autophagy receptor p62 to deliver mycobacteria into LC3-associated autophagosomes. It could be a viable evolutionary strategy adopted by M.tuberculosis to maintain long-term intracellular survival through self-controlling its intracellular bacterial loads to avoid excessive host inflammatory immune responses. This is Ubiquitin-binding protein Rv1468c from Mycobacterium tuberculosis (strain ATCC 25618 / H37Rv).